A 103-amino-acid chain; its full sequence is Small ribosomal subunit protein uS10 (103 aa).

It belongs to the universal ribosomal protein uS10 family. In terms of assembly, part of the 30S ribosomal subunit.

Its function is as follows. Involved in the binding of tRNA to the ribosomes. This Xanthomonas axonopodis pv. citri (strain 306) protein is Small ribosomal subunit protein uS10.